Here is a 306-residue protein sequence, read N- to C-terminus: UDP-3-O-acyl-N-acetylglucosamine deacetylase (306 aa).

His-79, His-238, and Asp-242 together coordinate Zn(2+). Catalysis depends on His-265, which acts as the Proton donor.

It belongs to the LpxC family. Zn(2+) serves as cofactor.

It catalyses the reaction a UDP-3-O-[(3R)-3-hydroxyacyl]-N-acetyl-alpha-D-glucosamine + H2O = a UDP-3-O-[(3R)-3-hydroxyacyl]-alpha-D-glucosamine + acetate. It participates in glycolipid biosynthesis; lipid IV(A) biosynthesis; lipid IV(A) from (3R)-3-hydroxytetradecanoyl-[acyl-carrier-protein] and UDP-N-acetyl-alpha-D-glucosamine: step 2/6. Functionally, catalyzes the hydrolysis of UDP-3-O-myristoyl-N-acetylglucosamine to form UDP-3-O-myristoylglucosamine and acetate, the committed step in lipid A biosynthesis. The sequence is that of UDP-3-O-acyl-N-acetylglucosamine deacetylase from Shewanella violacea (strain JCM 10179 / CIP 106290 / LMG 19151 / DSS12).